We begin with the raw amino-acid sequence, 302 residues long: Aspartate carbamoyltransferase catalytic subunit (302 aa).

Residues R53 and T54 each coordinate carbamoyl phosphate. K82 is a binding site for L-aspartate. R103, H131, and Q134 together coordinate carbamoyl phosphate. 2 residues coordinate L-aspartate: R164 and R223. Positions 260 and 261 each coordinate carbamoyl phosphate.

This sequence belongs to the aspartate/ornithine carbamoyltransferase superfamily. ATCase family. Heterooligomer of catalytic and regulatory chains.

The catalysed reaction is carbamoyl phosphate + L-aspartate = N-carbamoyl-L-aspartate + phosphate + H(+). It functions in the pathway pyrimidine metabolism; UMP biosynthesis via de novo pathway; (S)-dihydroorotate from bicarbonate: step 2/3. Its function is as follows. Catalyzes the condensation of carbamoyl phosphate and aspartate to form carbamoyl aspartate and inorganic phosphate, the committed step in the de novo pyrimidine nucleotide biosynthesis pathway. This is Aspartate carbamoyltransferase catalytic subunit from Methanococcus vannielii (strain ATCC 35089 / DSM 1224 / JCM 13029 / OCM 148 / SB).